We begin with the raw amino-acid sequence, 60 residues long: Large ribosomal subunit protein bL32 (60 aa).

Over residues 1–23 (MAKHPVPKKKTSKSKRDMRRSHH) the composition is skewed to basic residues. Residues 1–26 (MAKHPVPKKKTSKSKRDMRRSHHALV) form a disordered region.

Belongs to the bacterial ribosomal protein bL32 family.

The chain is Large ribosomal subunit protein bL32 from Deinococcus geothermalis (strain DSM 11300 / CIP 105573 / AG-3a).